The sequence spans 174 residues: Guided entry of tail-anchored proteins factor 1 (174 aa).

Topologically, residues 1-8 are lumenal; sequence MSASETDR. Residues 9–29 form a helical membrane-spanning segment; sequence WAWLLVLCFVFGCNVLRILLP. Residues 30–99 are Cytoplasmic-facing; sequence TLSSFISRVL…VKARTAQLAK (70 aa). Positions 39–94 form a coiled coil; that stretch reads LQKDAEQESQMRAEIQSMKQELSTVNMMDEFARYARLERKINKMTDKLKTHVKART. An interaction with GET3/TRC40 region spans residues 39–97; that stretch reads LQKDAEQESQMRAEIQSMKQELSTVNMMDEFARYARLERKINKMTDKLKTHVKARTAQL. A helical membrane pass occupies residues 100-120; that stretch reads IKWFISVAFYVLQAALMISLI. Over 121 to 148 the chain is Lumenal; that stretch reads WKYYSVPVAVVPSKWITPLDRLVAFPTR. The chain crosses the membrane as a helical span at residues 149 to 169; the sequence is VAGGIGVTCWILVCNKVVAII. The Cytoplasmic segment spans residues 170 to 174; the sequence is LHPFS.

The protein belongs to the WRB/GET1 family. Component of the Golgi to ER traffic (GET) complex, which is composed of GET1, CAMLG/GET2 and GET3. Within the complex, GET1 and CAMLG form a heterotetramer which is stabilized by phosphatidylinositol binding and which binds to the GET3 homodimer. Interacts with CAMLG/GET2 (via C-terminus). GET3 shows a higher affinity for CAMLG than for GET1.

It localises to the endoplasmic reticulum membrane. In terms of biological role, required for the post-translational delivery of tail-anchored (TA) proteins to the endoplasmic reticulum. Together with CAMLG/GET2, acts as a membrane receptor for soluble GET3/TRC40, which recognizes and selectively binds the transmembrane domain of TA proteins in the cytosol. Required to ensure correct topology and ER insertion of CAMLG. This is Guided entry of tail-anchored proteins factor 1 from Rattus norvegicus (Rat).